A 265-amino-acid chain; its full sequence is Expansin-like A1 (265 aa).

The N-terminal stretch at 1–20 (MGSFLFLIVVIFLFSSSVNA) is a signal peptide. The Expansin-like EG45 domain maps to 41-147 (SGACAYGSMA…QRVPCDYGNK (107 aa)). The chain crosses the membrane as a helical span at residues 42–62 (GACAYGSMATSFFAGHIAAAI). Residues asparagine 99 and asparagine 102 are each glycosylated (N-linked (GlcNAc...) asparagine). One can recognise an Expansin-like CBD domain in the interval 161 to 244 (NYLEIKLLYQ…NWEAGKIYDA (84 aa)).

Belongs to the expansin family. Expansin-like A subfamily.

The protein localises to the membrane. The protein is Expansin-like A1 (EXLA1) of Arabidopsis thaliana (Mouse-ear cress).